We begin with the raw amino-acid sequence, 314 residues long: MSQALRIVFAGTPEFAAEHLKALLDTPHRIVAVYTQPDRPAGRGQKLMPSAVKSLALEHGLPVMQPQSLRNAEAQAELAALRADLMVVVAYGLILPQAVLDIPRLGCINSHASLLPRWRGAAPIQRAVEAGDAESGVTVMQMEAGLDTGPMLLKVSTPISAADTGGSLHDRLAALGPKAVIEAIAGLAAGTLHGEIQDDALATYAHKLNKDEARLDWSRPAVELERQVRAFTPWPVCHTSLADAPLKVLGASLGQGSGAPGTILEASRDGLLVACGEGALRLTRLQLPGGKPLAFADLYNSRREQFAAGQVLGQ.

113–116 lines the (6S)-5,6,7,8-tetrahydrofolate pocket; it reads SLLP.

This sequence belongs to the Fmt family.

It carries out the reaction L-methionyl-tRNA(fMet) + (6R)-10-formyltetrahydrofolate = N-formyl-L-methionyl-tRNA(fMet) + (6S)-5,6,7,8-tetrahydrofolate + H(+). Its function is as follows. Attaches a formyl group to the free amino group of methionyl-tRNA(fMet). The formyl group appears to play a dual role in the initiator identity of N-formylmethionyl-tRNA by promoting its recognition by IF2 and preventing the misappropriation of this tRNA by the elongation apparatus. In Pseudomonas aeruginosa (strain ATCC 15692 / DSM 22644 / CIP 104116 / JCM 14847 / LMG 12228 / 1C / PRS 101 / PAO1), this protein is Methionyl-tRNA formyltransferase.